The chain runs to 1065 residues: Probable importin-7 homolog (1065 aa).

An Importin N-terminal domain is found at 25–98 (AEAQLQQIKV…KENLIDLLVH (74 aa)). The tract at residues 958–996 (ENGGDLGEDEGDNFDDQNDDDDQDSEEDLFEDEDTPDFE) is disordered. Residues 963–996 (LGEDEGDNFDDQNDDDDQDSEEDLFEDEDTPDFE) are compositionally biased toward acidic residues.

It belongs to the importin beta family.

Its subcellular location is the cytoplasm. It is found in the nucleus. May function in nuclear protein import. The polypeptide is Probable importin-7 homolog (Dictyostelium discoideum (Social amoeba)).